The sequence spans 157 residues: DNA gyrase inhibitor (157 aa).

Belongs to the DNA gyrase inhibitor family. Interacts with DNA gyrase.

The protein localises to the cytoplasm. Its function is as follows. Inhibits the supercoiling activity of DNA gyrase. Acts by inhibiting DNA gyrase at an early step, prior to (or at the step of) binding of DNA by the gyrase. It protects cells against toxins that target DNA gyrase, by inhibiting activity of these toxins and reducing the formation of lethal double-strand breaks in the cell. The protein is DNA gyrase inhibitor of Cronobacter sakazakii (strain ATCC BAA-894) (Enterobacter sakazakii).